The following is a 359-amino-acid chain: Transcription factor bHLH130 (359 aa).

Serine 60 is modified (phosphoserine). Positions 161 to 186 (EEDEESPSNSNGLRRHCSLSSRPPSS) are disordered. The segment covering 167 to 184 (PSNSNGLRRHCSLSSRPP) has biased composition (polar residues). The bHLH domain occupies 285-335 (CATHPRSIAERVRRTRISERMRKLQELVPNMDKQTNTSDMLDLAVDYIKDL).

Homodimer.

It is found in the nucleus. The chain is Transcription factor bHLH130 (BHLH130) from Arabidopsis thaliana (Mouse-ear cress).